Consider the following 968-residue polypeptide: RNA polymerase-associated protein RapA (968 aa).

In terms of domain architecture, Helicase ATP-binding spans 163–332; it reads EVGQRFAPRV…FARLRLLDPD (170 aa). 176-183 contacts ATP; sequence DEVGLGKT. Residues 278 to 281 carry the DEAH box motif; that stretch reads DEAH. One can recognise a Helicase C-terminal domain in the interval 491 to 678; sequence RVDWLIDFLK…NTKSRYQELK (188 aa).

Belongs to the SNF2/RAD54 helicase family. RapA subfamily. Interacts with the RNAP. Has a higher affinity for the core RNAP than for the holoenzyme. Its ATPase activity is stimulated by binding to RNAP.

Functionally, transcription regulator that activates transcription by stimulating RNA polymerase (RNAP) recycling in case of stress conditions such as supercoiled DNA or high salt concentrations. Probably acts by releasing the RNAP, when it is trapped or immobilized on tightly supercoiled DNA. Does not activate transcription on linear DNA. Probably not involved in DNA repair. This Shewanella piezotolerans (strain WP3 / JCM 13877) protein is RNA polymerase-associated protein RapA.